Consider the following 504-residue polypeptide: Anaerobic nitric oxide reductase transcription regulator NorR (504 aa).

A 4-aspartylphosphate modification is found at aspartate 57. Residues 187 to 416 (MIGLSPGMTQ…LEHAIHRAVV (230 aa)) form the Sigma-54 factor interaction domain. ATP-binding positions include 215-222 (GETGTGKE) and 278-287 (ADNGTLFLDE). The H-T-H motif DNA-binding region spans 479–498 (WAACARMLETDVANLHRLAK).

The protein operates within nitrogen metabolism; nitric oxide reduction. Its function is as follows. Required for the expression of anaerobic nitric oxide (NO) reductase, acts as a transcriptional activator for at least the norVW operon. Activation also requires sigma-54. This is Anaerobic nitric oxide reductase transcription regulator NorR from Escherichia coli O6:H1 (strain CFT073 / ATCC 700928 / UPEC).